A 205-amino-acid polypeptide reads, in one-letter code: Octanoyltransferase (205 aa).

Residues 30-205 (ERTADEIWLL…QALRARLGYA (176 aa)) enclose the BPL/LPL catalytic domain. Substrate-binding positions include 69–76 (RGGQVTYH), 136–138 (SLG), and 149–151 (GLA). Cys167 acts as the Acyl-thioester intermediate in catalysis.

Belongs to the LipB family.

It is found in the cytoplasm. It catalyses the reaction octanoyl-[ACP] + L-lysyl-[protein] = N(6)-octanoyl-L-lysyl-[protein] + holo-[ACP] + H(+). Its pathway is protein modification; protein lipoylation via endogenous pathway; protein N(6)-(lipoyl)lysine from octanoyl-[acyl-carrier-protein]: step 1/2. Its function is as follows. Catalyzes the transfer of endogenously produced octanoic acid from octanoyl-acyl-carrier-protein onto the lipoyl domains of lipoate-dependent enzymes. Lipoyl-ACP can also act as a substrate although octanoyl-ACP is likely to be the physiological substrate. The chain is Octanoyltransferase from Ectopseudomonas mendocina (strain ymp) (Pseudomonas mendocina).